The following is a 626-amino-acid chain: Chaperone protein HtpG (626 aa).

The segment at 1–329 is a; substrate-binding; that stretch reads MSEETLSFQA…SSDLPLNVSR (329 aa). Residues 330–549 form a b region; it reads EMLQDDPRLR…EGAMSLHLQK (220 aa). The interval 550–626 is c; that stretch reads LLRQANQGSE…LTEVMGKGLI (77 aa).

This sequence belongs to the heat shock protein 90 family. Homodimer.

It is found in the cytoplasm. Its function is as follows. Molecular chaperone. Has ATPase activity. This is Chaperone protein HtpG from Rhodospirillum rubrum (strain ATCC 11170 / ATH 1.1.1 / DSM 467 / LMG 4362 / NCIMB 8255 / S1).